Here is a 222-residue protein sequence, read N- to C-terminus: MQESIQLVIDSLPFLLKGAGYTLQLSIGGMFFGLLLGFILALMRLSPIWPVRWLARFYISIFRGTPLIAQLFMIYYGLPQFGIELDPIPSAMIGLSLNTAAYAAETLRAAISSIDKGQWEAAASIGMTPWQTMRRAILPQAARVALPPLSNSFISLVKDTSLAATIQVPELFRQAQLITSRTLEVFTMYLAASLIYWIMATVLSTLQNHFENQLNRQEREPK.

Over 1-22 (MQESIQLVIDSLPFLLKGAGYT) the chain is Periplasmic. The 189-residue stretch at 19–207 (AGYTLQLSIG…IMATVLSTLQ (189 aa)) folds into the ABC transmembrane type-1 domain. Residues 23–43 (LQLSIGGMFFGLLLGFILALM) form a helical membrane-spanning segment. Residues 44-64 (RLSPIWPVRWLARFYISIFRG) lie on the Cytoplasmic side of the membrane. A helical transmembrane segment spans residues 65-85 (TPLIAQLFMIYYGLPQFGIEL). Residues 86-182 (DPIPSAMIGL…RQAQLITSRT (97 aa)) are Periplasmic-facing. The chain crosses the membrane as a helical span at residues 183 to 203 (LEVFTMYLAASLIYWIMATVL). Topologically, residues 204 to 222 (STLQNHFENQLNRQEREPK) are cytoplasmic.

It belongs to the binding-protein-dependent transport system permease family. HisMQ subfamily. The complex is composed of two ATP-binding proteins (TcyN), two transmembrane proteins (TcyL) and a solute-binding protein (TcyJ).

Its subcellular location is the cell inner membrane. Functionally, part of the ABC transporter complex TcyJLN involved in L-cystine import. Responsible for the translocation of the substrate across the membrane. In Escherichia coli O6:H1 (strain CFT073 / ATCC 700928 / UPEC), this protein is L-cystine transport system permease protein TcyL.